Reading from the N-terminus, the 272-residue chain is 2-dehydro-3-deoxyphosphooctonate aldolase (272 aa).

Belongs to the KdsA family.

It localises to the cytoplasm. It catalyses the reaction D-arabinose 5-phosphate + phosphoenolpyruvate + H2O = 3-deoxy-alpha-D-manno-2-octulosonate-8-phosphate + phosphate. It functions in the pathway carbohydrate biosynthesis; 3-deoxy-D-manno-octulosonate biosynthesis; 3-deoxy-D-manno-octulosonate from D-ribulose 5-phosphate: step 2/3. Its pathway is bacterial outer membrane biogenesis; lipopolysaccharide biosynthesis. The protein is 2-dehydro-3-deoxyphosphooctonate aldolase of Pelobacter propionicus (strain DSM 2379 / NBRC 103807 / OttBd1).